The primary structure comprises 105 residues: Integration host factor (105 aa).

Positions leucine 64 to lysine 71 match the H2TH motif, binds DNA motif. The lid, binds DNA stretch occupies residues alanine 82–glutamine 94.

Belongs to the actinobacterial IHF (aIHF) family. In terms of assembly, homodimer in solution. Binds DNA as a monomer.

It is found in the cytoplasm. Functionally, a nucleoid-associated protein (NAP) required for septum formation and normal cell division as well as for DNA segregation. Binds about 135 sites across the chromosome, most of which are genes involved in virulence; most DNA-binding sites are immediately upstream of transcription start sites. When mIHF is depleted most of the genes are down-regulated. Binds supercoiled and linear dsDNA in a concentration-dependent manner, probably non-sequence specifically. Binding compacts DNA, protecting it from degradation. Initial binding to supercoiled DNA opens it fully, followed by bending and compaction. Bends and thus compacts linear DNA. Binds DNA via 2 sites, forms left-handed loops on linear DNA; at low concentrations unwinds larger cosmids (42.6 kb) then collapses and condenses DNA as protein levels rise. Forms mostly left-handed loops on condensing cosmid DNA. The protein is Integration host factor of Mycobacterium tuberculosis (strain ATCC 25618 / H37Rv).